The following is a 194-amino-acid chain: Orotate phosphoribosyltransferase (194 aa).

117–125 contacts 5-phospho-alpha-D-ribose 1-diphosphate; the sequence is EDIVSTGLS. S121 and R149 together coordinate orotate.

This sequence belongs to the purine/pyrimidine phosphoribosyltransferase family. PyrE subfamily. In terms of assembly, homodimer. The cofactor is Mg(2+).

It catalyses the reaction orotidine 5'-phosphate + diphosphate = orotate + 5-phospho-alpha-D-ribose 1-diphosphate. It participates in pyrimidine metabolism; UMP biosynthesis via de novo pathway; UMP from orotate: step 1/2. Functionally, catalyzes the transfer of a ribosyl phosphate group from 5-phosphoribose 1-diphosphate to orotate, leading to the formation of orotidine monophosphate (OMP). The protein is Orotate phosphoribosyltransferase of Maricaulis maris (strain MCS10) (Caulobacter maris).